The primary structure comprises 441 residues: NADH-quinone oxidoreductase subunit D (441 aa).

It belongs to the complex I 49 kDa subunit family. In terms of assembly, NDH-1 is composed of 14 different subunits. Subunits NuoB, C, D, E, F, and G constitute the peripheral sector of the complex.

The protein localises to the cell membrane. It catalyses the reaction a quinone + NADH + 5 H(+)(in) = a quinol + NAD(+) + 4 H(+)(out). Functionally, NDH-1 shuttles electrons from NADH, via FMN and iron-sulfur (Fe-S) centers, to quinones in the respiratory chain. The immediate electron acceptor for the enzyme in this species is believed to be a menaquinone. Couples the redox reaction to proton translocation (for every two electrons transferred, four hydrogen ions are translocated across the cytoplasmic membrane), and thus conserves the redox energy in a proton gradient. In Mycobacterium avium (strain 104), this protein is NADH-quinone oxidoreductase subunit D.